We begin with the raw amino-acid sequence, 313 residues long: Homoserine O-acetyltransferase (313 aa).

The Acyl-thioester intermediate role is filled by Cys142. Substrate contacts are provided by Lys163 and Ser191. His234 serves as the catalytic Proton acceptor. Glu236 is a catalytic residue. Residue Arg248 participates in substrate binding.

Belongs to the MetA family.

Its subcellular location is the cytoplasm. The catalysed reaction is L-homoserine + acetyl-CoA = O-acetyl-L-homoserine + CoA. Its pathway is amino-acid biosynthesis; L-methionine biosynthesis via de novo pathway; O-acetyl-L-homoserine from L-homoserine: step 1/1. In terms of biological role, transfers an acetyl group from acetyl-CoA to L-homoserine, forming acetyl-L-homoserine. The sequence is that of Homoserine O-acetyltransferase from Streptococcus sanguinis (strain SK36).